A 322-amino-acid polypeptide reads, in one-letter code: Cysteine protease yopT1 (322 aa).

Catalysis depends on residues Cys139, His258, and Asp274.

Belongs to the peptidase C58 family. In terms of assembly, interacts with human ARHA.

Its subcellular location is the secreted. In terms of biological role, cysteine protease, which is translocated into infected cells and plays a central role in pathogenesis by cleaving the C-terminus end of the human small GTPase RhoA/ARHA, a regulator of cytoskeleton. Once cleaved, ARHA loses its lipid modification, and is released from the cell membrane, leading to the subsequent disruption of actin cytoskeleton of the host cell. The chain is Cysteine protease yopT1 (yopT1) from Yersinia enterocolitica.